Here is a 344-residue protein sequence, read N- to C-terminus: Meiotic recombination protein DMC1 homolog A (344 aa).

Residue 133–140 (GEFRSGKT) coordinates ATP. Residue R235 coordinates dsDNA. 5 residues coordinate ssDNA: R235, F238, R241, R247, and R315. Residues R241 and R247 each contribute to the dsDNA site.

This sequence belongs to the RecA family. DMC1 subfamily. Expressed in meiotic young panicles.

It is found in the nucleus. Functionally, recombinase that may participate in meiotic recombination, specifically in homologous strand assimilation, which is required for the resolution of meiotic double-strand breaks. Exhibits DNA-dependent ATPase activity when bound to single-stranded DNA (ssDNA). Mediates renaturation of homologous complementary strands as well as assimilation of single strands into homologous supercoiled duplexes leading to D-loop formation. Binds circular single-stranded DNA (ssDNA) and circular double-stranded DNA (dsDNA) in vitro. Catalyzes DNA homologous renaturation and DNA strand exchange. The rates of these activities are dependent on the state of ATP hydrolysis. Forms helical filaments along ssDNA and dsDNA, and promotes strand exchange between ssDNA and dsDNA with long DNA substrates of several thousand base pairs. The presence of the replication protein A is not required for this activity. Seems to be required for homologous pairing and subsequent chromosome segregation during male meiosis. May be not directly required for homologous pairing during male meiosis. Required for synaptonemal complex assembly and crossover formation. Functions redundantly with DMC1B. This is Meiotic recombination protein DMC1 homolog A from Oryza sativa subsp. japonica (Rice).